Consider the following 35-residue polypeptide: Endochitinase 2 (35 aa).

This sequence belongs to the glycosyl hydrolase 19 family. Chitinase class I subfamily.

It carries out the reaction Random endo-hydrolysis of N-acetyl-beta-D-glucosaminide (1-&gt;4)-beta-linkages in chitin and chitodextrins.. In terms of biological role, defense against chitin-containing fungal pathogens. This chain is Endochitinase 2, found in Capsicum chinense (Scotch bonnet).